A 912-amino-acid polypeptide reads, in one-letter code: Protein translocase subunit SecA (912 aa).

ATP-binding positions include glutamine 87, 105–109 (GEGKT), and aspartate 508. A disordered region spans residues 855-912 (QHQDAGGYGADEEVEQMQGGNAPVPVSQVTRDEPKVGRNDPCPCGSGKKYKHCHGQLS). Zn(2+)-binding residues include cysteine 896, cysteine 898, cysteine 907, and histidine 908. Positions 902–912 (KKYKHCHGQLS) are enriched in basic residues.

Belongs to the SecA family. Monomer and homodimer. Part of the essential Sec protein translocation apparatus which comprises SecA, SecYEG and auxiliary proteins SecDF-YajC and YidC. Zn(2+) serves as cofactor.

The protein resides in the cell inner membrane. It localises to the cytoplasm. It catalyses the reaction ATP + H2O + cellular proteinSide 1 = ADP + phosphate + cellular proteinSide 2.. Its function is as follows. Part of the Sec protein translocase complex. Interacts with the SecYEG preprotein conducting channel. Has a central role in coupling the hydrolysis of ATP to the transfer of proteins into and across the cell membrane, serving both as a receptor for the preprotein-SecB complex and as an ATP-driven molecular motor driving the stepwise translocation of polypeptide chains across the membrane. In Xanthomonas campestris pv. campestris (strain B100), this protein is Protein translocase subunit SecA.